We begin with the raw amino-acid sequence, 662 residues long: MTENKTFYITTPIYYPSGKLHLGSSYTTIACDVLARYKRLMGFDTFYLTGLDEHGMKIQRKAEELGMTPKEYLDPMAADVQELWKKLDISYDKFIRTTDTYHEEAVAKAFEQLLEQDDIYLGKYAGWYSVSDEEFFTETQLEEIFRDESGNITGGIAPSGHEVEWVEEETYFFRMGKYADWLLQYYDEHPDFIQPEVRKNEMVNNFIKPGLEDLALTRTSFTWGIPVPSNPKHVVYVWFDALLNYITALGYNSDNDSNFKKYWPGINMVGKEIVRFHTIYWPIMLHALGLPAPKKIFAHGWLLMKDGKMSKSKGNVVYPEMLIERYGLDAVRYYLMRAISFGQDGIFTPEDFVGRINFDLANDLGNLLNRTVSMINKYNDGKIEATGVSTEFDASLEEVVEETISHFHKAMDKFEFNVALADVWTLISRTNKYIDETAPWVLAKSEDDKAKLNNVLYHLAENLRIAGALLQPFMRATSGKIFEQLGMDERSFSLENLSFGYSFTHPVVAKGQPIFPRLDVEEEVAYIKLQMAGGVLPEKEWVPEEVELNLTLPQIKFDDFEKIELKVAEVLEVEPVEGSDKLLRFKLDAGDSEPRQILSGIAQFYPNEQELVGKKLQIVANLKPRKMMKKYVSQGMILSAEFDGKLSVLTVDDDVPAGSLIG.

The 'HIGH' region motif lies at 14–24 (YYPSGKLHLGS). Positions 308 to 312 (KMSKS) match the 'KMSKS' region motif. ATP is bound at residue lysine 311. The region spanning 559–662 (DFEKIELKVA…DDVPAGSLIG (104 aa)) is the tRNA-binding domain.

The protein belongs to the class-I aminoacyl-tRNA synthetase family. MetG type 2B subfamily. In terms of assembly, homodimer.

The protein resides in the cytoplasm. The enzyme catalyses tRNA(Met) + L-methionine + ATP = L-methionyl-tRNA(Met) + AMP + diphosphate. Functionally, is required not only for elongation of protein synthesis but also for the initiation of all mRNA translation through initiator tRNA(fMet) aminoacylation. The chain is Methionine--tRNA ligase (metG) from Lactococcus lactis subsp. lactis (strain IL1403) (Streptococcus lactis).